The primary structure comprises 129 residues: Small ribosomal subunit protein uS11 (129 aa).

This sequence belongs to the universal ribosomal protein uS11 family. Part of the 30S ribosomal subunit. Interacts with proteins S7 and S18. Binds to IF-3.

Functionally, located on the platform of the 30S subunit, it bridges several disparate RNA helices of the 16S rRNA. Forms part of the Shine-Dalgarno cleft in the 70S ribosome. The chain is Small ribosomal subunit protein uS11 from Staphylococcus haemolyticus (strain JCSC1435).